The chain runs to 226 residues: PKHD-type hydroxylase Sde_2812 (226 aa).

The 101-residue stretch at 78–178 (KIFPPLFNCY…RLASFFWLQS (101 aa)) folds into the Fe2OG dioxygenase domain. Residues histidine 96, aspartate 98, and histidine 159 each coordinate Fe cation. Arginine 169 is a 2-oxoglutarate binding site.

Fe(2+) is required as a cofactor. The cofactor is L-ascorbate.

The protein is PKHD-type hydroxylase Sde_2812 of Saccharophagus degradans (strain 2-40 / ATCC 43961 / DSM 17024).